A 1664-amino-acid chain; its full sequence is MYND-type zinc finger-containing chromatin reader Zmynd8 (1664 aa).

Composition is skewed to low complexity over residues 1-16 (MEST…SLKS), 30-40 (SPQPQLQSSSL), and 61-84 (SAPP…INVG). Disordered stretches follow at residues 1–84 (MEST…INVG), 251–271 (SLSN…LRSE), and 295–323 (LALN…KTPE). A compositionally biased stretch (basic and acidic residues) spans 258 to 271 (NDDKGPRRSNLRSE). Positions 296-308 (ALNTSGEGESSLF) are enriched in polar residues. Residues 309–320 (SDASDTKTTTAK) are compositionally biased toward low complexity. The PHD-type zinc finger occupies 343 to 389 (DPFCWKCRGCGKLMPCSKCLRSFHSYCVRPATTKFDSSWKCPECQVI). Residues Cys346, Cys349, Cys358, Cys361, His366, Cys369, Cys383, and Cys386 each coordinate Zn(2+). The Bromo domain occupies 401 to 504 (VSVDLLSQLL…KVCRQEANEI (104 aa)). Residues Cys507, Cys510, and Cys525 each coordinate Zn(2+). The PWWP domain occupies 528–579 (PHLLLWAKLKGFPYWPAKAMGSSNSTLVNVRFFGKHDRAFVPVKDCFLYSAQ). Disordered regions lie at residues 672–693 (KTKA…KKLS), 747–815 (ESVE…QNEN), 857–905 (KIPR…RQQE), and 919–1139 (TEVM…TNTS). Residues 676–690 (TESGNESDQSPSPTK) show a composition bias toward polar residues. The span at 775–784 (HKRKSKHARK) shows a compositional bias: basic residues. Basic and acidic residues predominate over residues 785 to 800 (QHDNQDNQIEEAEKTG). Residues 874 to 884 (IPLPTAPPPKQ) are compositionally biased toward pro residues. Polar residues predominate over residues 935 to 952 (PANQPQTDQVPLQQETIT). The span at 953-962 (AQPESQMPAA) shows a compositional bias: low complexity. Residues 1006–1019 (PPMPLPMPPPPPLP) show a composition bias toward pro residues. A compositionally biased stretch (polar residues) spans 1037 to 1053 (TTIQRVSQKQGGKSTDT). Over residues 1073–1097 (SPTHSPLLSTAPSPSASPKPTSTLA) the composition is skewed to low complexity. Positions 1399, 1402, 1410, 1411, 1417, 1421, 1429, and 1433 each coordinate Zn(2+). The MYND-type zinc finger occupies 1399 to 1433 (CANCMREAQLYCCWNTSYCDYPCQQLHWPGHSATC). Residues 1613–1648 (VPKATGRSGKNNSRMRQTYSNNINNSNPQGMRCNNN) are disordered. Residues 1620–1648 (SGKNNSRMRQTYSNNINNSNPQGMRCNNN) are compositionally biased toward polar residues.

The protein localises to the nucleus. The protein resides in the chromosome. Chromatin reader that recognizes specific histone signatures to regulate transcription. Plays a role in neuronal development. In Drosophila melanogaster (Fruit fly), this protein is MYND-type zinc finger-containing chromatin reader Zmynd8.